We begin with the raw amino-acid sequence, 337 residues long: Large ribosomal subunit protein uL3 (337 aa).

A disordered region spans residues 1-26; that stretch reads MTRHHQPRKGSVAFSPRKRVARETPR.

The protein belongs to the universal ribosomal protein uL3 family. In terms of assembly, part of the 50S ribosomal subunit. Forms a cluster with proteins L14 and L24e.

In terms of biological role, one of the primary rRNA binding proteins, it binds directly near the 3'-end of the 23S rRNA, where it nucleates assembly of the 50S subunit. The protein is Large ribosomal subunit protein uL3 of Methanosphaera stadtmanae (strain ATCC 43021 / DSM 3091 / JCM 11832 / MCB-3).